The primary structure comprises 213 residues: Uridine kinase (213 aa).

Residue 15 to 22 coordinates ATP; the sequence is GASASGKS.

The protein belongs to the uridine kinase family.

It localises to the cytoplasm. The enzyme catalyses uridine + ATP = UMP + ADP + H(+). The catalysed reaction is cytidine + ATP = CMP + ADP + H(+). Its pathway is pyrimidine metabolism; CTP biosynthesis via salvage pathway; CTP from cytidine: step 1/3. It functions in the pathway pyrimidine metabolism; UMP biosynthesis via salvage pathway; UMP from uridine: step 1/1. This chain is Uridine kinase, found in Enterobacter sp. (strain 638).